The chain runs to 320 residues: Cytochrome f (320 aa).

Positions 1-35 are cleaved as a signal peptide; sequence MQNRNTFSWVKEQMTRFISVSIMIYVITRTSISNA. Heme-binding residues include Tyr-36, Cys-56, Cys-59, and His-60. The helical transmembrane segment at 286 to 306 threads the bilayer; it reads VQGLLFFLASVILAQIFLVLK.

It belongs to the cytochrome f family. In terms of assembly, the 4 large subunits of the cytochrome b6-f complex are cytochrome b6, subunit IV (17 kDa polypeptide, petD), cytochrome f and the Rieske protein, while the 4 small subunits are PetG, PetL, PetM and PetN. The complex functions as a dimer. It depends on heme as a cofactor.

It localises to the plastid. It is found in the chloroplast thylakoid membrane. Component of the cytochrome b6-f complex, which mediates electron transfer between photosystem II (PSII) and photosystem I (PSI), cyclic electron flow around PSI, and state transitions. This chain is Cytochrome f, found in Liriodendron tulipifera (Tuliptree).